The primary structure comprises 705 residues: Kinesin-like protein KIF2A (705 aa).

A globular region spans residues 1-216 (MATANFGKIQ…LDYRPLTTAD (216 aa)). A disordered region spans residues 65–186 (DLVPDEDIEP…QELREKRAQD (122 aa)). A Phosphoserine modification is found at serine 75. The residue at position 96 (threonine 96) is a Phosphothreonine. Lysine 101 bears the N6-acetyllysine mark. Residues 122–139 (LPEQSSSAQQNGSVSDIS) are compositionally biased toward polar residues. Phosphoserine is present on residues serine 134 and serine 139. A compositionally biased stretch (basic and acidic residues) spans 158 to 186 (CVKEVEKLQEKREKRRLQQQELREKRAQD). The region spanning 222–552 (RICVCVRKRP…LRYANRVKEL (331 aa)) is the Kinesin motor domain. 312-319 (GQTGSGKT) contacts ATP. A phosphoserine mark is found at threonine 528 and tyrosine 545. Residues 659 to 698 (ATQLEAILEQKIDILTELRDKVKSFRAALQEEEQASKQIN) are a coiled coil.

Belongs to the TRAFAC class myosin-kinesin ATPase superfamily. Kinesin family. MCAK/KIF2 subfamily. Interacts with AURKA and PLK1. Interacts with PSRC1. Interacts with MCRS1; the interaction enhances recruitment of KIF2A to the minus ends of spindle microtubules which promotes chromosome alignment. As to expression, highest level in lung. High level in ovary, moderate levels in heart, kidney, placenta, skeletal muscle and spleen (at protein level). Pancreas and spleen express a shorter isoform (at protein level). Expressed in the flagellum of elongated spermatids and sperm in the testis lumen (at protein level). Isoform 1 expressed in neuronal cells. Isoform 2 expressed in astrocytes and fibroblasts.

It localises to the cytoplasm. Its subcellular location is the cytoskeleton. The protein localises to the microtubule organizing center. The protein resides in the centrosome. It is found in the spindle pole. It localises to the spindle. Its subcellular location is the lysosome. Plus end-directed microtubule-dependent motor required for normal brain development. May regulate microtubule dynamics during axonal growth. Required for normal progression through mitosis. Required for normal congress of chromosomes at the metaphase plate. Required for normal spindle dynamics during mitosis. Promotes spindle turnover. Implicated in formation of bipolar mitotic spindles. Has microtubule depolymerization activity. The protein is Kinesin-like protein KIF2A (Kif2a) of Mus musculus (Mouse).